Reading from the N-terminus, the 315-residue chain is Olfactory receptor 2V1 (315 aa).

Residues 1–31 (MGRWVNQSYTDGFFLLGIFSHSQTDLVLFSA) are Extracellular-facing. N-linked (GlcNAc...) asparagine glycosylation is present at Asn-6. A helical membrane pass occupies residues 32–52 (VMVVFTVALCGNVLLIFLIYL). At 53–58 (DAGLHT) the chain is on the cytoplasmic side. The chain crosses the membrane as a helical span at residues 59–79 (PMYFFLSQLSLMDLMLVCNIV). Residues 80–99 (PKMAANFLSGRKSISFVGCG) lie on the Extracellular side of the membrane. Cysteines 98 and 180 form a disulfide. Residues 100 to 120 (IQIGFFVSLVGSEGLLLGLMA) form a helical membrane-spanning segment. Residues 121–149 (YDRYVAVSHPLHYPILMNQRVCLQITGSS) lie on the Cytoplasmic side of the membrane. Residues 150-170 (WAFGIIDGVIQMVAAMGLPYC) form a helical membrane-spanning segment. Residues 171–198 (GSRSVDHFFCEVQALLKLACADTSLFDT) are Extracellular-facing. Residues 199–219 (LLFACCVFMLLLPFSIIMASY) form a helical membrane-spanning segment. Topologically, residues 220 to 238 (ACILGAVLRIRSAQAWKKA) are cytoplasmic. The chain crosses the membrane as a helical span at residues 239–259 (LATCSSHLTAVTLFYGAAMFM). Residues 260–272 (YLRPRRYRAPSHD) are Extracellular-facing. A helical membrane pass occupies residues 273–293 (KVASIFYTVLTPMLNPLIYSL). Residues 294–315 (RNGEVMGALRKGLDRCRIGSQH) are Cytoplasmic-facing.

This sequence belongs to the G-protein coupled receptor 1 family.

The protein localises to the cell membrane. Functionally, odorant receptor. The polypeptide is Olfactory receptor 2V1 (OR2V1) (Homo sapiens (Human)).